The chain runs to 251 residues: Hydroxyacylglutathione hydrolase (251 aa).

The Zn(2+) site is built by histidine 53, histidine 55, aspartate 57, histidine 58, histidine 110, aspartate 127, and histidine 165.

It belongs to the metallo-beta-lactamase superfamily. Glyoxalase II family. In terms of assembly, monomer. It depends on Zn(2+) as a cofactor.

It catalyses the reaction an S-(2-hydroxyacyl)glutathione + H2O = a 2-hydroxy carboxylate + glutathione + H(+). It functions in the pathway secondary metabolite metabolism; methylglyoxal degradation; (R)-lactate from methylglyoxal: step 2/2. Thiolesterase that catalyzes the hydrolysis of S-D-lactoyl-glutathione to form glutathione and D-lactic acid. This chain is Hydroxyacylglutathione hydrolase, found in Pectobacterium carotovorum subsp. carotovorum (strain PC1).